A 510-amino-acid polypeptide reads, in one-letter code: Glycosyl hydrolase YngK (510 aa).

The N-terminal stretch at 1–30 is a signal peptide; that stretch reads MKVCQKSIVRFLVSLIIGTFVISVPFMANA.

Belongs to the glycosyl hydrolase-like 10 (GHL10) family.

This is Glycosyl hydrolase YngK (yngK) from Bacillus subtilis (strain 168).